Here is a 342-residue protein sequence, read N- to C-terminus: MNNPIPSNLKSEAKKAAKILREFTEITSRNGPDKIIPAHVIAKAKGLAILSVIKAGFLVTARGGSGIVVARLPDGKWSAPSAIGIAGLGGGFEIGIEVSDLVIILNYDRAVEAFAKGGNLTLGGNLTVAVGPLGRNLEGNVALRSSAAVFTYCKSRGLFAGVSLEGSCLIERKETNRKFYCQDIRAYDILFGDTPRPAQAEDLYEILDSFTEKYENEGQRINARKAAREQRKSSAKELPPKPLSRPQQSSAPVQLNSGSQSNRNEYKLYPGLSSYHERVGNLNQPIEVTALYSFEGQQPGDLNFQAGDRITVISKTDSHFDWWEGKLRGQTGIFPANYVTMN.

The segment at 218–266 (GQRINARKAAREQRKSSAKELPPKPLSRPQQSSAPVQLNSGSQSNRNEY) is disordered. Basic and acidic residues predominate over residues 226 to 239 (AAREQRKSSAKELP). A compositionally biased stretch (polar residues) spans 245-263 (RPQQSSAPVQLNSGSQSNR). The SH3 domain maps to 283–342 (NQPIEVTALYSFEGQQPGDLNFQAGDRITVISKTDSHFDWWEGKLRGQTGIFPANYVTMN).

It belongs to the SH3YL1 family. Interacts with SH3D19.

This is SH3 domain-containing YSC84-like protein 1 (SH3YL1) from Homo sapiens (Human).